The primary structure comprises 269 residues: MSNTDASGEKRVTGTSERREQIIQRLRQQGSVQVNDLSALYGVSTVTIRNDLAFLEKQGIAVRAYGGALICDSTTPSVEPSVEDKSALNTAMKRSVAKAAVELIQPGHRVILDSGTTTFEIARLMRKHTDVIAMTNGMNVANALLEAEGVELLMTGGHLRRQSQSFYGDQAEQSLQNYHFDMLFLGVDAIDLERGVSTHNEDEARLNRRMCEVAERIIVVTDSSKFNRSSLHKIIDTQRIDMIIVDEGIPADSLEGLRKAGVEVILVGE.

Residues 15 to 70 (TSERREQIIQRLRQQGSVQVNDLSALYGVSTVTIRNDLAFLEKQGIAVRAYGGALI) form the HTH deoR-type domain. Positions 32 to 51 (VQVNDLSALYGVSTVTIRND) form a DNA-binding region, H-T-H motif.

In terms of biological role, probable repressor for the aga operon for N-acetyl galactosamine transport and metabolism. The polypeptide is Putative aga operon transcriptional repressor (agaR) (Escherichia coli O157:H7).